The primary structure comprises 140 residues: MRHGVSGRKLNVTSSHRAAMFRNMAVALIKHEQITTTLPKAKELRPVVEKLITLGKRGDLHARRQAFAQLRDDAVVTKLFSAVAERYKGRAGGYSRVLKAGVRYGDNADMAVIELVDRDVAAKGQDSGPKQNVAEEQEAA.

The protein belongs to the bacterial ribosomal protein bL17 family. In terms of assembly, part of the 50S ribosomal subunit. Contacts protein L32.

In Gluconobacter oxydans (strain 621H) (Gluconobacter suboxydans), this protein is Large ribosomal subunit protein bL17.